Reading from the N-terminus, the 200-residue chain is uncharacterized protein (200 aa).

The interval 1-21 (MSNSAQRDARNSRDESARASD) is disordered. Residues 7–21 (RDARNSRDESARASD) are compositionally biased toward basic and acidic residues.

This is an uncharacterized protein from Mycobacterium tuberculosis (strain CDC 1551 / Oshkosh).